A 348-amino-acid polypeptide reads, in one-letter code: Ion-translocating oxidoreductase complex subunit D (348 aa).

Transmembrane regions (helical) follow at residues 25 to 45 (ILAALPGLAVQCYFFGWGTFI), 68 to 88 (PISPTLMDQSAVLTALLIGVA), and 124 to 144 (AMAAYVLLLVSFPVLMTTWAA). Thr182 carries the FMN phosphoryl threonine modification. 5 consecutive transmembrane segments (helical) span residues 211–231 (TGEGWFWVNLAYLCGGLFLLA), 237–257 (WHISGGLIGALFVCSLFGFGA), 263–283 (ASPLFNLFSGATMLAAFFIAT), 296–316 (LLFGAMIGVLIYLIRTFGGYP), and 317–337 (DGVAFAVLLANLCAPLIDYYI).

This sequence belongs to the NqrB/RnfD family. As to quaternary structure, the complex is composed of six subunits: RnfA, RnfB, RnfC, RnfD, RnfE and RnfG. The cofactor is FMN.

It localises to the cell inner membrane. In terms of biological role, part of a membrane-bound complex that couples electron transfer with translocation of ions across the membrane. The sequence is that of Ion-translocating oxidoreductase complex subunit D from Shewanella amazonensis (strain ATCC BAA-1098 / SB2B).